Here is a 310-residue protein sequence, read N- to C-terminus: Terpene synthase 6 (310 aa).

A DDxx(x)D/E motif motif is present at residues 93–98; sequence DDFYFE. Positions 222–230 match the NDxxSxxxD/E motif motif; that stretch reads NDCYSFNKE.

The protein belongs to the terpene synthase family.

The enzyme catalyses (2E,6E)-farnesyl diphosphate = (E)-beta-farnesene + diphosphate. The catalysed reaction is (2E,6E)-farnesyl diphosphate = (1S,2S,4R)-beta-elemene + diphosphate. It catalyses the reaction (2E,6E)-farnesyl diphosphate = (3E,6E)-alpha-farnesene + diphosphate. Terpene synthase that converts its substrate farnesyl diphosphate (FPP) into the sesquiterpenes beta-elemene, (E)-beta-farnesene and (E,E)-alpha-farnesene. This Dictyostelium purpureum (Slime mold) protein is Terpene synthase 6.